An 84-amino-acid chain; its full sequence is U4-theraphotoxin-Hhn1a (84 aa).

A signal peptide spans 1–22 (MKVTLIAIPTCAAVLVLHTTAA). Positions 23 to 47 (EELEESQLMEVGMPDTELAAVDEER) are excised as a propeptide. Cystine bridges form between C51-C65, C55-C76, and C70-C81.

It belongs to the neurotoxin 12 (Hwtx-2) family. 02 (Hwtx-2) subfamily. Expressed by the venom gland.

Its subcellular location is the secreted. Its function is as follows. Postsynaptic neurotoxin. The polypeptide is U4-theraphotoxin-Hhn1a (Cyriopagopus hainanus (Chinese bird spider)).